A 287-amino-acid polypeptide reads, in one-letter code: Rhomboid-like protein 18 (287 aa).

6 helical membrane passes run 10-30, 53-73, 90-110, 117-137, 145-165, and 172-192; these read NAPV…FFGI, LIIS…LYLL, VFIF…LSLT, LLTS…FLDI, VLGV…QLLL, and IFTG…IFGI. Residues 244–284 form the UBA domain; sequence EPSEEAIATLVSMGFDQNAARQALVHARNDVNAATNILLEA.

Belongs to the peptidase S54 family.

It is found in the membrane. In terms of biological role, probable rhomboid-type serine protease that catalyzes intramembrane proteolysis. In Arabidopsis thaliana (Mouse-ear cress), this protein is Rhomboid-like protein 18.